We begin with the raw amino-acid sequence, 119 residues long: Large ribosomal subunit protein bL20 (119 aa).

Belongs to the bacterial ribosomal protein bL20 family.

Functionally, binds directly to 23S ribosomal RNA and is necessary for the in vitro assembly process of the 50S ribosomal subunit. It is not involved in the protein synthesizing functions of that subunit. This chain is Large ribosomal subunit protein bL20, found in Xanthomonas oryzae pv. oryzae (strain PXO99A).